A 404-amino-acid polypeptide reads, in one-letter code: Argininosuccinate synthase (404 aa).

9–17 (AYSGGLDTS) is an ATP binding site. An L-citrulline-binding site is contributed by Tyr-86. Residue Gly-116 participates in ATP binding. Residues Thr-118, Asn-122, and Asp-123 each contribute to the L-aspartate site. Asn-122 contributes to the L-citrulline binding site. Positions 126, 174, 183, 259, and 271 each coordinate L-citrulline.

It belongs to the argininosuccinate synthase family. Type 1 subfamily. As to quaternary structure, homotetramer.

The protein resides in the cytoplasm. It catalyses the reaction L-citrulline + L-aspartate + ATP = 2-(N(omega)-L-arginino)succinate + AMP + diphosphate + H(+). It functions in the pathway amino-acid biosynthesis; L-arginine biosynthesis; L-arginine from L-ornithine and carbamoyl phosphate: step 2/3. The protein is Argininosuccinate synthase of Listeria innocua serovar 6a (strain ATCC BAA-680 / CLIP 11262).